A 58-amino-acid polypeptide reads, in one-letter code: Teratocyte protein CftICK-III (58 aa).

The signal sequence occupies residues 1-24 (MQKFMRLFFLGLFFILFMTTQIKA). Intrachain disulfides connect cysteine 27–cysteine 42, cysteine 34–cysteine 47, and cysteine 41–cysteine 55.

Abundantly expressed by teratocytes, which are extra-embryonic cells released by parasitoid wasps into their hosts during larval eclosion.

The protein resides in the secreted. Its function is as follows. This endoparasitoid wasp peptide has immununosuppressive and insecticidal activities. Suppress cellular immunity which is detectable as a reduction of hemocyte encapsulation in the host. In vivo, ingestion of this peptide (probably at excessive doses) increases larval mortality and reduces leaf consumption in both lepidopteran species D.saccharalis and S.frugiperda, which are permissive and non-permissive hosts for C.flavipes, respectively. In Cotesia flavipes (Parasitic wasp), this protein is Teratocyte protein CftICK-III.